A 283-amino-acid polypeptide reads, in one-letter code: MQIHKLCIFVLFISLLSSKTISAVKFNFNRFDGTNLIFIGYAELGPATDGMSRSGALSMTRDNIPFSHGQGLYTDPIPFKSSNNTSSSVYSFKTSFTFSITPRRSNPNPGHGIAFIVVPTVAYEYDQDSTRGFLGLVNLTTNGNPNNHLFAVEFDVFQDKRFGDINDNHVGVNINSVNSKVSEKAGYWIQTRTRGKNQWLFKEVKLSSGDNYKAWIEYKNSKVIVWLAPAHLKKPKRPLIETQVDLSEVVLETMYTGFSGSMGRGVERHDIWSWSFENTAKNN.

Residues 1 to 23 form the signal peptide; it reads MQIHKLCIFVLFISLLSSKTISA. The legume-lectin like stretch occupies residues 24-277; sequence VKFNFNRFDG…RHDIWSWSFE (254 aa). N-linked (GlcNAc...) asparagine glycosylation is found at Asn-84 and Asn-138. Ser-247 bears the Phosphoserine mark.

This sequence belongs to the leguminous lectin family.

The protein localises to the secreted. Its subcellular location is the extracellular space. It localises to the apoplast. The sequence is that of Lectin-like protein At1g53080 from Arabidopsis thaliana (Mouse-ear cress).